The following is a 391-amino-acid chain: Immediate-early protein 2 (391 aa).

It belongs to the herpesviridae US22 family.

The protein localises to the host cytoplasm. The protein resides in the host nucleus. Its function is as follows. Involved in the reactivation of latent MCMV in spleen cells. The chain is Immediate-early protein 2 (IE2) from Murid herpesvirus 1 (strain Smith) (MuHV-1).